The following is a 249-amino-acid chain: 3-deoxy-manno-octulosonate cytidylyltransferase (249 aa).

It belongs to the KdsB family.

It localises to the cytoplasm. The catalysed reaction is 3-deoxy-alpha-D-manno-oct-2-ulosonate + CTP = CMP-3-deoxy-beta-D-manno-octulosonate + diphosphate. The protein operates within nucleotide-sugar biosynthesis; CMP-3-deoxy-D-manno-octulosonate biosynthesis; CMP-3-deoxy-D-manno-octulosonate from 3-deoxy-D-manno-octulosonate and CTP: step 1/1. It participates in bacterial outer membrane biogenesis; lipopolysaccharide biosynthesis. Its function is as follows. Activates KDO (a required 8-carbon sugar) for incorporation into bacterial lipopolysaccharide in Gram-negative bacteria. The polypeptide is 3-deoxy-manno-octulosonate cytidylyltransferase (Coxiella burnetii (strain RSA 331 / Henzerling II)).